We begin with the raw amino-acid sequence, 433 residues long: Minor capsid protein (433 aa).

In terms of domain architecture, BIG2 spans 353–419 (TGVTLSQKTM…ADITATTSNG (67 aa)).

It belongs to the T7virus minor capsid protein family. Interacts with the connector protein and the major capsid protein.

It localises to the virion. Its function is as follows. Assembles with the major capsid protein to form an icosahedral capsid with a T=7 symmetry, about 60 nm in diameter, and consisting of 415 capsid proteins. The major and minor capsid proteins are incorporated into the capsid in about a 90/10 ratio respectively. Once the capsid is formed, encapsidates one single copy of the viral genome. The sequence is that of Minor capsid protein (10) from Escherichia coli (Bacteriophage T3).